Consider the following 210-residue polypeptide: Thymidylate kinase (210 aa).

Residue 10–17 (GLEGAGKS) participates in ATP binding.

It belongs to the thymidylate kinase family.

The enzyme catalyses dTMP + ATP = dTDP + ADP. Its function is as follows. Phosphorylation of dTMP to form dTDP in both de novo and salvage pathways of dTTP synthesis. The chain is Thymidylate kinase from Hamiltonella defensa subsp. Acyrthosiphon pisum (strain 5AT).